The sequence spans 568 residues: Glucose-6-phosphate isomerase, cytosolic 1 (568 aa).

Glutamate 360 (proton donor) is an active-site residue. Residues histidine 391 and lysine 516 contribute to the active site.

It belongs to the GPI family. Homodimer.

Its subcellular location is the cytoplasm. It carries out the reaction alpha-D-glucose 6-phosphate = beta-D-fructose 6-phosphate. It participates in carbohydrate degradation; glycolysis; D-glyceraldehyde 3-phosphate and glycerone phosphate from D-glucose: step 2/4. This is Glucose-6-phosphate isomerase, cytosolic 1 (PGIC1) from Clarkia williamsonii.